A 280-amino-acid chain; its full sequence is 2,3,4,5-tetrahydropyridine-2,6-dicarboxylate N-succinyltransferase (280 aa).

Arginine 107 and aspartate 144 together coordinate substrate.

Belongs to the transferase hexapeptide repeat family. Homotrimer.

It is found in the cytoplasm. It catalyses the reaction (S)-2,3,4,5-tetrahydrodipicolinate + succinyl-CoA + H2O = (S)-2-succinylamino-6-oxoheptanedioate + CoA. The protein operates within amino-acid biosynthesis; L-lysine biosynthesis via DAP pathway; LL-2,6-diaminopimelate from (S)-tetrahydrodipicolinate (succinylase route): step 1/3. The sequence is that of 2,3,4,5-tetrahydropyridine-2,6-dicarboxylate N-succinyltransferase from Granulibacter bethesdensis (strain ATCC BAA-1260 / CGDNIH1).